The primary structure comprises 637 residues: tRNA 5-methylaminomethyl-2-thiouridine biosynthesis bifunctional protein MnmC (637 aa).

The tract at residues 1–20 is disordered; the sequence is MSERIEWLEDGTAGGSPYSP. The tRNA (mnm(5)s(2)U34)-methyltransferase stretch occupies residues 1–232; the sequence is MSERIEWLED…KRDNLQGEYQ (232 aa). The segment at 255 to 637 is FAD-dependent cmnm(5)s(2)U34 oxidoreductase; sequence IGAGLAGSAV…YATRLQPSGS (383 aa).

It in the N-terminal section; belongs to the methyltransferase superfamily. tRNA (mnm(5)s(2)U34)-methyltransferase family. This sequence in the C-terminal section; belongs to the DAO family. Requires FAD as cofactor.

It localises to the cytoplasm. It catalyses the reaction 5-aminomethyl-2-thiouridine(34) in tRNA + S-adenosyl-L-methionine = 5-methylaminomethyl-2-thiouridine(34) in tRNA + S-adenosyl-L-homocysteine + H(+). In terms of biological role, catalyzes the last two steps in the biosynthesis of 5-methylaminomethyl-2-thiouridine (mnm(5)s(2)U) at the wobble position (U34) in tRNA. Catalyzes the FAD-dependent demodification of cmnm(5)s(2)U34 to nm(5)s(2)U34, followed by the transfer of a methyl group from S-adenosyl-L-methionine to nm(5)s(2)U34, to form mnm(5)s(2)U34. The chain is tRNA 5-methylaminomethyl-2-thiouridine biosynthesis bifunctional protein MnmC from Polaromonas naphthalenivorans (strain CJ2).